Reading from the N-terminus, the 226-residue chain is uncharacterized protein (226 aa).

This is an uncharacterized protein from Bacillus subtilis (strain 168).